The chain runs to 120 residues: Ribosome-binding factor A (120 aa).

Belongs to the RbfA family. As to quaternary structure, monomer. Binds 30S ribosomal subunits, but not 50S ribosomal subunits or 70S ribosomes.

It is found in the cytoplasm. Functionally, one of several proteins that assist in the late maturation steps of the functional core of the 30S ribosomal subunit. Associates with free 30S ribosomal subunits (but not with 30S subunits that are part of 70S ribosomes or polysomes). Required for efficient processing of 16S rRNA. May interact with the 5'-terminal helix region of 16S rRNA. In Borreliella burgdorferi (strain ATCC 35210 / DSM 4680 / CIP 102532 / B31) (Borrelia burgdorferi), this protein is Ribosome-binding factor A.